A 159-amino-acid polypeptide reads, in one-letter code: 2-C-methyl-D-erythritol 2,4-cyclodiphosphate synthase (159 aa).

The a divalent metal cation site is built by D8 and H10. Residues 8–10 (DVH) and 34–35 (HS) contribute to the 4-CDP-2-C-methyl-D-erythritol 2-phosphate site. H42 is an a divalent metal cation binding site. 4-CDP-2-C-methyl-D-erythritol 2-phosphate-binding positions include 56–58 (DIG), 61–65 (FPDTD), 100–106 (AQAPKML), 132–135 (TTTE), F139, and R142.

This sequence belongs to the IspF family. Homotrimer. Requires a divalent metal cation as cofactor.

It catalyses the reaction 4-CDP-2-C-methyl-D-erythritol 2-phosphate = 2-C-methyl-D-erythritol 2,4-cyclic diphosphate + CMP. Its pathway is isoprenoid biosynthesis; isopentenyl diphosphate biosynthesis via DXP pathway; isopentenyl diphosphate from 1-deoxy-D-xylulose 5-phosphate: step 4/6. Involved in the biosynthesis of isopentenyl diphosphate (IPP) and dimethylallyl diphosphate (DMAPP), two major building blocks of isoprenoid compounds. Catalyzes the conversion of 4-diphosphocytidyl-2-C-methyl-D-erythritol 2-phosphate (CDP-ME2P) to 2-C-methyl-D-erythritol 2,4-cyclodiphosphate (ME-CPP) with a corresponding release of cytidine 5-monophosphate (CMP). In Salmonella dublin (strain CT_02021853), this protein is 2-C-methyl-D-erythritol 2,4-cyclodiphosphate synthase.